Here is a 215-residue protein sequence, read N- to C-terminus: Large ribosomal subunit protein uL4 (215 aa).

The interval 46–76 is disordered; the sequence is TAKSKNRAEVSGGGRKPWAQKGGGRARAGSI. A compositionally biased stretch (gly residues) spans 56 to 71; the sequence is SGGGRKPWAQKGGGRA.

This sequence belongs to the universal ribosomal protein uL4 family. As to quaternary structure, part of the 50S ribosomal subunit.

Its function is as follows. One of the primary rRNA binding proteins, this protein initially binds near the 5'-end of the 23S rRNA. It is important during the early stages of 50S assembly. It makes multiple contacts with different domains of the 23S rRNA in the assembled 50S subunit and ribosome. Functionally, forms part of the polypeptide exit tunnel. This is Large ribosomal subunit protein uL4 from Helicobacter pylori (strain HPAG1).